A 608-amino-acid polypeptide reads, in one-letter code: Centromere DNA-binding protein complex CBF3 subunit B (608 aa).

A DNA-binding region (zn(2)-C6 fungal-type) is located at residues 14–42 (CSVCTRRKVKCDRMIPCGNCRKRGQDSEC). Ser575 is modified (phosphoserine).

As to quaternary structure, component of the CBF3 copmplex, which is formed of CBF3A/CBF2, CBF3B/CEP3, CBF3C/CTF13 and CBF3D.

It localises to the nucleus. It is found in the chromosome. The protein resides in the centromere. In terms of biological role, acts as a component of the centromere DNA-binding protein complex CBF3, which is essential for chromosome segregation and movement of centromeres along microtubules. CBF3 is required for the recruitment of other kinetochore complexes to CEN DNA. It plays a role in the attachment of chromosomes to the spindle and binds selectively to a highly conserved DNA sequence called CDEIII, found in centromers and in several promoters. The protein is Centromere DNA-binding protein complex CBF3 subunit B (CEP3) of Saccharomyces cerevisiae (strain ATCC 204508 / S288c) (Baker's yeast).